Consider the following 412-residue polypeptide: Na(+)/H(+) antiporter NhaA 1 (412 aa).

The next 10 helical transmembrane spans lie at 34–54 (VGGM…NSPA), 75–95 (LTIG…VAGL), 114–134 (LPVV…FAIG), 142–162 (AAWA…LSLT), 183–203 (LGAI…LALL), 234–254 (WIAV…LGLL), 282–302 (LIVP…EALV), 309–329 (VAIA…FGSS), 349–369 (LSAL…IAEL), and 379–399 (AKAA…VMLL).

The protein belongs to the NhaA Na(+)/H(+) (TC 2.A.33) antiporter family.

The protein localises to the cell membrane. The catalysed reaction is Na(+)(in) + 2 H(+)(out) = Na(+)(out) + 2 H(+)(in). Functionally, na(+)/H(+) antiporter that extrudes sodium in exchange for external protons. This is Na(+)/H(+) antiporter NhaA 1 from Saccharopolyspora erythraea (strain ATCC 11635 / DSM 40517 / JCM 4748 / NBRC 13426 / NCIMB 8594 / NRRL 2338).